The following is a 129-amino-acid chain: Large ribosomal subunit protein uL22 (129 aa).

It belongs to the universal ribosomal protein uL22 family. In terms of assembly, part of the 50S ribosomal subunit.

Its function is as follows. This protein binds specifically to 23S rRNA; its binding is stimulated by other ribosomal proteins, e.g. L4, L17, and L20. It is important during the early stages of 50S assembly. It makes multiple contacts with different domains of the 23S rRNA in the assembled 50S subunit and ribosome. Functionally, the globular domain of the protein is located near the polypeptide exit tunnel on the outside of the subunit, while an extended beta-hairpin is found that lines the wall of the exit tunnel in the center of the 70S ribosome. This chain is Large ribosomal subunit protein uL22, found in Aster yellows witches'-broom phytoplasma (strain AYWB).